Here is a 566-residue protein sequence, read N- to C-terminus: Urease subunit beta (566 aa).

Residues 129-566 enclose the Urease domain; that stretch reads GGIDTHIHFI…VPMARRYFMF (438 aa). Residues His-134, His-136, and Lys-217 each contribute to the Ni(2+) site. An N6-carboxylysine modification is found at Lys-217. A substrate-binding site is contributed by His-219. Ni(2+) contacts are provided by His-246 and His-272. Residue His-320 is the Proton donor of the active site. Asp-360 is a Ni(2+) binding site.

The protein belongs to the metallo-dependent hydrolases superfamily. Urease alpha subunit family. As to quaternary structure, heterohexamer of 3 UreA (alpha) and 3 UreB (beta) subunits. Requires Ni cation as cofactor. In terms of processing, carboxylation allows a single lysine to coordinate two nickel ions.

It is found in the cytoplasm. The enzyme catalyses urea + 2 H2O + H(+) = hydrogencarbonate + 2 NH4(+). Its pathway is nitrogen metabolism; urea degradation; CO(2) and NH(3) from urea (urease route): step 1/1. The polypeptide is Urease subunit beta (Aliarcobacter butzleri (strain RM4018) (Arcobacter butzleri)).